A 185-amino-acid chain; its full sequence is Large ribosomal subunit protein uL5 (185 aa).

The protein belongs to the universal ribosomal protein uL5 family. As to quaternary structure, part of the 50S ribosomal subunit; part of the 5S rRNA/L5/L18/L25 subcomplex. Contacts the 5S rRNA and the P site tRNA. Forms a bridge to the 30S subunit in the 70S ribosome.

This is one of the proteins that bind and probably mediate the attachment of the 5S RNA into the large ribosomal subunit, where it forms part of the central protuberance. In the 70S ribosome it contacts protein S13 of the 30S subunit (bridge B1b), connecting the 2 subunits; this bridge is implicated in subunit movement. Contacts the P site tRNA; the 5S rRNA and some of its associated proteins might help stabilize positioning of ribosome-bound tRNAs. The protein is Large ribosomal subunit protein uL5 of Caulobacter sp. (strain K31).